The following is a 522-amino-acid chain: Sorting nexin-1 (522 aa).

2 disordered regions span residues 1–84 (MASG…QDQE) and 115–142 (SLPP…QEDQ). Phosphoserine occurs at positions 32 and 39. A compositionally biased stretch (acidic residues) spans 35 to 45 (EAGDSDTEGED). Residues Thr41 and Thr48 each carry the phosphothreonine modification. A compositionally biased stretch (polar residues) spans 55-73 (KHQSPKITTSLLPINNGSK). A phosphoserine mark is found at Ser58 and Ser72. A compositionally biased stretch (acidic residues) spans 132–142 (EELEEEEQEDQ). The 130-residue stretch at 143 to 272 (FDLTVGITDP…EFLEKEELPR (130 aa)) folds into the PX domain. Arg186, Ser188, and Lys214 together coordinate a 1,2-diacyl-sn-glycero-3-phospho-(1D-myo-inositol-3-phosphate). Ser188 bears the Phosphoserine mark. Lys237 is modified (N6-acetyllysine). Residue Arg238 participates in a 1,2-diacyl-sn-glycero-3-phospho-(1D-myo-inositol-3-phosphate) binding. At Ser280 the chain carries Phosphoserine. A membrane-binding amphipathic helix region spans residues 281–298 (GAGLLKMFNKATDAVSKM). Residues 302–522 (MNESDIWFEE…AFLPEAKAIS (221 aa)) enclose the BAR domain.

It belongs to the sorting nexin family. As to quaternary structure, predominantly forms heterodimers with BAR domain-containing sorting nexins SNX5, SNX6 and SNX32; can self-associate to form homodimers. The heterodimers are proposed to self-assemble into helical arrays on the membrane to stabilize and expand local membrane curvature underlying endosomal tubule formation. Thought to be a component of the originally described retromer complex (also called SNX-BAR retromer) which is a pentamer containing the heterotrimeric retromer cargo-selective complex (CSC), also described as vacuolar protein sorting subcomplex (VPS) and a heterodimeric membrane-deforming subcomplex formed between SNX1 or SNX2 and SNX5 or SNX6 (also called SNX-BAR subcomplex); the respective CSC and SNX-BAR subcomplexes associate with low affinity. Interacts with SNX5, SNX6, SNX32, VPS26A, VPS29, VPS35, DRD5, DENND5A, KALRN, RHOG (GDP-bound form). The interaction with SNX2 is reported controversially. Interacts with DNAJC13; prevented by presence of HGS. Interacts with HGS.

The protein localises to the endosome membrane. The protein resides in the golgi apparatus. It is found in the trans-Golgi network membrane. It localises to the early endosome membrane. Its subcellular location is the cell projection. The protein localises to the lamellipodium. Functionally, involved in several stages of intracellular trafficking. Interacts with membranes containing phosphatidylinositol 3-phosphate (PtdIns(3P)) or phosphatidylinositol 3,5-bisphosphate (PtdIns(3,5)P2). Acts in part as component of the retromer membrane-deforming SNX-BAR subcomplex. The SNX-BAR retromer mediates retrograde transport of cargo proteins from endosomes to the trans-Golgi network (TGN) and is involved in endosome-to-plasma membrane transport for cargo protein recycling. The SNX-BAR subcomplex functions to deform the donor membrane into a tubular profile called endosome-to-TGN transport carrier (ETC). Can sense membrane curvature and has in vitro vesicle-to-membrane remodeling activity. Involved in retrograde endosome-to-TGN transport of lysosomal enzyme receptors (IGF2R, M6PR and SORT1) and Shiginella dysenteria toxin stxB. Plays a role in targeting ligand-activated EGFR to the lysosomes for degradation after endocytosis from the cell surface and release from the Golgi. Involvement in retromer-independent endocytic trafficking of P2RY1 and lysosomal degradation of protease-activated receptor-1/F2R. Promotes KALRN- and RHOG-dependent but retromer-independent membrane remodeling such as lamellipodium formation; the function is dependent on GEF activity of KALRN. Required for endocytosis of DRD5 upon agonist stimulation but not for basal receptor trafficking. The chain is Sorting nexin-1 (SNX1) from Homo sapiens (Human).